A 1134-amino-acid polypeptide reads, in one-letter code: Early transcription factor large subunit homolog (1134 aa).

A Helicase ATP-binding domain is found at 52-352 (KGGRAFFPCD…PNGQPLQRQQ (301 aa)). 99 to 106 (WQTGTGKS) lines the ATP pocket. The short motif at 281-284 (DEIH) is the DEAH box element. A Helicase C-terminal domain is found at 524–725 (MMKDILSIIR…EGDKALRKHA (202 aa)).

It belongs to the DEAD box helicase family. DEAH subfamily.

It localises to the virion. It carries out the reaction ATP + H2O = ADP + phosphate + H(+). Its function is as follows. Putative initation factor. This African swine fever virus (isolate Pig/Kenya/KEN-50/1950) (ASFV) protein is Early transcription factor large subunit homolog.